Reading from the N-terminus, the 1158-residue chain is Hephaestin (1158 aa).

Residues 1 to 23 form the signal peptide; the sequence is MESGHLLWALLFMQSLWPQLTDG. Plastocyanin-like domains are found at residues 24–206, 218–366, 370–560, 570–718, 731–903, and 911–1067; these read ATRV…LITC, QRQD…VKSC, PPVD…LLVC, KQKG…VSQC, AARI…LAIC, and HGGR…SRTE. Topologically, residues 24–1110 are extracellular; that stretch reads ATRVYYLGIR…PIKNVEMLAS (1087 aa). Na(+)-binding residues include Gly70 and Tyr73. Cu(2+) contacts are provided by His126 and His128. Position 126 (His126) interacts with O2. Ca(2+) contacts are provided by Lys134, Asp152, and Asp153. The N-linked (GlcNAc...) asparagine glycan is linked to Asn164. Cys180 and Cys206 are disulfide-bonded. His186 and His188 together coordinate Cu(2+). His186 is an O2 binding site. The N-linked (GlcNAc...) asparagine glycan is linked to Asn236. Ser265 is a Na(+) binding site. Cysteines 285 and 366 form a disulfide. Cu(2+)-binding residues include His304, Cys347, and His352. The Na(+) site is built by Phe416, Gly425, and Tyr428. A disulfide bond links Cys534 and Cys560. Asn588 is a glycosylation site (N-linked (GlcNAc...) asparagine). Position 617 (Ser617) interacts with Na(+). An intrachain disulfide couples Cys637 to Cys718. The Cu(2+) site is built by His656, Cys699, His704, and Met709. Asn714 and Asn758 each carry an N-linked (GlcNAc...) asparagine glycan. Na(+)-binding residues include Phe769 and Gly778. N-linked (GlcNAc...) asparagine glycosylation is found at Asn829 and Asn873. An intrachain disulfide couples Cys877 to Cys903. N-linked (GlcNAc...) asparagine glycosylation is present at Asn931. Positions 1000, 1003, 1005, 1045, 1046, 1047, 1051, and 1056 each coordinate Cu(2+). The O2 site is built by His1003 and His1005. His1047 contacts O2. The helical transmembrane segment at 1111–1131 threads the bilayer; sequence VLVAISVTLLLVVLALGGVVW. The Cytoplasmic segment spans residues 1132–1158; sequence YQHRQRKLRRNRRSILDDSFKLLSFKQ. Residues Ser1145, Ser1150, and Ser1155 each carry the phosphoserine modification.

It belongs to the multicopper oxidase family. In terms of assembly, part of a complex composed of SLC40A1/ferroportin, TF/transferrin and HEPH/hephaestin that transfers iron from cells to transferrin. Cu cation serves as cofactor. Expressed by intestinal absorptive cells (at protein level). Also detected in breast, colon, bone trabecular cells and fibroblasts.

Its subcellular location is the basolateral cell membrane. It carries out the reaction 4 Fe(2+) + O2 + 4 H(+) = 4 Fe(3+) + 2 H2O. Plasma membrane ferroxidase that mediates the extracellular conversion of ferrous/Fe(2+) iron into its ferric/Fe(3+) form. Couples ferroportin which specifically exports ferrous/Fe(2+) iron from cells to transferrin that only binds and shuttles extracellular ferric/Fe(3+) iron throughout the body. By helping iron transfer from cells to blood mainly contributes to dietary iron absorption by the intestinal epithelium and more generally regulates iron levels in the body. This Homo sapiens (Human) protein is Hephaestin.